A 126-amino-acid chain; its full sequence is Large ribosomal subunit protein bL12 (126 aa).

The protein belongs to the bacterial ribosomal protein bL12 family. Homodimer. Part of the ribosomal stalk of the 50S ribosomal subunit. Forms a multimeric L10(L12)X complex, where L10 forms an elongated spine to which 2 to 4 L12 dimers bind in a sequential fashion. Binds GTP-bound translation factors.

Forms part of the ribosomal stalk which helps the ribosome interact with GTP-bound translation factors. Is thus essential for accurate translation. The polypeptide is Large ribosomal subunit protein bL12 (Saccharophagus degradans (strain 2-40 / ATCC 43961 / DSM 17024)).